The primary structure comprises 121 residues: Peptidyl-tRNA hydrolase (121 aa).

It belongs to the PTH2 family.

Its subcellular location is the cytoplasm. It catalyses the reaction an N-acyl-L-alpha-aminoacyl-tRNA + H2O = an N-acyl-L-amino acid + a tRNA + H(+). The natural substrate for this enzyme may be peptidyl-tRNAs which drop off the ribosome during protein synthesis. In Sulfurisphaera tokodaii (strain DSM 16993 / JCM 10545 / NBRC 100140 / 7) (Sulfolobus tokodaii), this protein is Peptidyl-tRNA hydrolase.